The following is a 231-amino-acid chain: DNA repair protein RecO (231 aa).

This sequence belongs to the RecO family.

Its function is as follows. Involved in DNA repair and RecF pathway recombination. The protein is DNA repair protein RecO of Coxiella burnetii (strain CbuK_Q154) (Coxiella burnetii (strain Q154)).